The following is a 112-amino-acid chain: T cell receptor alpha variable 7 (112 aa).

The first 21 residues, 1–21 (MEKMRRPVLIIFCLCLGWANG), serve as a signal peptide directing secretion. One can recognise an Ig-like domain in the interval 22–112 (ENQVEHSPHF…DSATYFCAVD (91 aa)). An intrachain disulfide couples cysteine 44 to cysteine 109. Asparagine 84 and asparagine 90 each carry an N-linked (GlcNAc...) asparagine glycan.

In terms of assembly, alpha-beta TR is a heterodimer composed of an alpha and beta chain; disulfide-linked. The alpha-beta TR is associated with the transmembrane signaling CD3 coreceptor proteins to form the TR-CD3 (TcR or TCR). The assembly of alpha-beta TR heterodimers with CD3 occurs in the endoplasmic reticulum where a single alpha-beta TR heterodimer associates with one CD3D-CD3E heterodimer, one CD3G-CD3E heterodimer and one CD247 homodimer forming a stable octameric structure. CD3D-CD3E and CD3G-CD3E heterodimers preferentially associate with TR alpha and TR beta chains, respectively. The association of the CD247 homodimer is the last step of TcR assembly in the endoplasmic reticulum and is required for transport to the cell surface.

Its subcellular location is the cell membrane. Its function is as follows. V region of the variable domain of T cell receptor (TR) alpha chain that participates in the antigen recognition. Alpha-beta T cell receptors are antigen specific receptors which are essential to the immune response and are present on the cell surface of T lymphocytes. Recognize peptide-major histocompatibility (MH) (pMH) complexes that are displayed by antigen presenting cells (APC), a prerequisite for efficient T cell adaptive immunity against pathogens. Binding of alpha-beta TR to pMH complex initiates TR-CD3 clustering on the cell surface and intracellular activation of LCK that phosphorylates the ITAM motifs of CD3G, CD3D, CD3E and CD247 enabling the recruitment of ZAP70. In turn ZAP70 phosphorylates LAT, which recruits numerous signaling molecules to form the LAT signalosome. The LAT signalosome propagates signal branching to three major signaling pathways, the calcium, the mitogen-activated protein kinase (MAPK) kinase and the nuclear factor NF-kappa-B (NF-kB) pathways, leading to the mobilization of transcription factors that are critical for gene expression and essential for T cell growth and differentiation. The T cell repertoire is generated in the thymus, by V-(D)-J rearrangement. This repertoire is then shaped by intrathymic selection events to generate a peripheral T cell pool of self-MH restricted, non-autoaggressive T cells. Post-thymic interaction of alpha-beta TR with the pMH complexes shapes TR structural and functional avidity. This Homo sapiens (Human) protein is T cell receptor alpha variable 7.